Consider the following 358-residue polypeptide: Myb family transcription factor IPN2 (358 aa).

Residues 1–20 (MERMFPPKKPSTMNSHDRPM) are disordered. The region spanning 32-92 (TDPKPRLRWT…HLQKFRLGKQ (61 aa)) is the HTH myb-type domain. A DNA-binding region (H-T-H motif) is located at residues 63 to 88 (PKTIMRVMGVKGLTLYHLKSHLQKFR). A coiled-coil region spans residues 127-171 (NMNEMQIEVQRRLHEQLEVQKHLQLRIEAQGKYMQSILEKAYQTL). The LHEQLE motif lies at 139-144 (LHEQLE). A disordered region spans residues 310-358 (IYDSKPEEKKFDASMKLERPSPRRAPLGERMSPMITTGTMAQGRSSPFG). Over residues 311–330 (YDSKPEEKKFDASMKLERPS) the composition is skewed to basic and acidic residues. The span at 343-358 (MITTGTMAQGRSSPFG) shows a compositional bias: polar residues.

The protein belongs to the MYB-CC family. Interacts with NSP2. In terms of tissue distribution, expressed in leaves, stems, nodules and roots.

The protein localises to the nucleus. Its function is as follows. Transcriptional regulator required for Nod-factor-induced gene expression. Transcription activator involved in the induction of NIN and ENOD40 genes, which are required for rhizobial infection and early nodule development. Possesses strong transactivation activity in vitro. Does not seem to contribute to the early steps of the arbuscular mycorrhizal fungus infection and colonization processes in roots. This is Myb family transcription factor IPN2 from Lotus japonicus (Lotus corniculatus var. japonicus).